We begin with the raw amino-acid sequence, 666 residues long: Translation factor guf1, mitochondrial (666 aa).

The N-terminal 43 residues, 1-43 (MRGCLQLARWLRAAPKCPAASLLKPPSGLANPARFFTTSTACW), are a transit peptide targeting the mitochondrion. One can recognise a tr-type G domain in the interval 68–248 (DRYRNFCIVA…TVVEKIPAPV (181 aa)). GTP is bound by residues 77–84 (AHVDHGKS), 141–145 (DTPGH), and 195–198 (NKVD).

The protein belongs to the TRAFAC class translation factor GTPase superfamily. Classic translation factor GTPase family. LepA subfamily.

Its subcellular location is the mitochondrion inner membrane. The enzyme catalyses GTP + H2O = GDP + phosphate + H(+). Promotes mitochondrial protein synthesis. May act as a fidelity factor of the translation reaction, by catalyzing a one-codon backward translocation of tRNAs on improperly translocated ribosomes. Binds to mitochondrial ribosomes in a GTP-dependent manner. The chain is Translation factor guf1, mitochondrial (guf1) from Aspergillus niger (strain ATCC MYA-4892 / CBS 513.88 / FGSC A1513).